We begin with the raw amino-acid sequence, 122 residues long: Protein FAM223B (122 aa).

Belongs to the FAM223 family.

The protein is Protein FAM223B (FAM223B) of Homo sapiens (Human).